The following is a 398-amino-acid chain: 1-deoxy-D-xylulose 5-phosphate reductoisomerase (398 aa).

NADPH-binding residues include threonine 10, glycine 11, serine 12, isoleucine 13, glycine 36, arginine 37, asparagine 38, and asparagine 124. A 1-deoxy-D-xylulose 5-phosphate-binding site is contributed by lysine 125. An NADPH-binding site is contributed by glutamate 126. Aspartate 150 serves as a coordination point for Mn(2+). Serine 151, glutamate 152, serine 186, and histidine 209 together coordinate 1-deoxy-D-xylulose 5-phosphate. Glutamate 152 contacts Mn(2+). An NADPH-binding site is contributed by glycine 215. The 1-deoxy-D-xylulose 5-phosphate site is built by serine 222, asparagine 227, lysine 228, and glutamate 231. Glutamate 231 contributes to the Mn(2+) binding site.

The protein belongs to the DXR family. Homodimer. The cofactor is Mg(2+). Mn(2+) serves as cofactor.

The catalysed reaction is 2-C-methyl-D-erythritol 4-phosphate + NADP(+) = 1-deoxy-D-xylulose 5-phosphate + NADPH + H(+). It participates in isoprenoid biosynthesis; isopentenyl diphosphate biosynthesis via DXP pathway; isopentenyl diphosphate from 1-deoxy-D-xylulose 5-phosphate: step 1/6. Catalyzes the NADPH-dependent rearrangement and reduction of 1-deoxy-D-xylulose-5-phosphate (DXP) to 2-C-methyl-D-erythritol 4-phosphate (MEP). The polypeptide is 1-deoxy-D-xylulose 5-phosphate reductoisomerase (Yersinia pseudotuberculosis serotype IB (strain PB1/+)).